The primary structure comprises 394 residues: 3-phenylpropionate/cinnamic acid dioxygenase ferredoxin--NAD(+) reductase component (394 aa).

FAD is bound at residue threonine 5–lysine 36. Arginine 146–glutamate 174 lines the NAD(+) pocket.

It belongs to the bacterial ring-hydroxylating dioxygenase ferredoxin reductase family. As to quaternary structure, this dioxygenase system consists of four proteins: the two subunits of the hydroxylase component (HcaE and HcaF), a ferredoxin (HcaC) and a ferredoxin reductase (HcaD). Requires FAD as cofactor.

The enzyme catalyses 2 reduced [2Fe-2S]-[ferredoxin] + NAD(+) + H(+) = 2 oxidized [2Fe-2S]-[ferredoxin] + NADH. Its pathway is aromatic compound metabolism; 3-phenylpropanoate degradation. Its function is as follows. Part of the multicomponent 3-phenylpropionate dioxygenase, that converts 3-phenylpropionic acid (PP) and cinnamic acid (CI) into 3-phenylpropionate-dihydrodiol (PP-dihydrodiol) and cinnamic acid-dihydrodiol (CI-dihydrodiol), respectively. In Photorhabdus laumondii subsp. laumondii (strain DSM 15139 / CIP 105565 / TT01) (Photorhabdus luminescens subsp. laumondii), this protein is 3-phenylpropionate/cinnamic acid dioxygenase ferredoxin--NAD(+) reductase component.